A 241-amino-acid chain; its full sequence is Ribonuclease PH (241 aa).

Phosphate is bound by residues arginine 87 and 125–127; that span reads GTR.

Belongs to the RNase PH family. In terms of assembly, homohexameric ring arranged as a trimer of dimers.

The enzyme catalyses tRNA(n+1) + phosphate = tRNA(n) + a ribonucleoside 5'-diphosphate. In terms of biological role, phosphorolytic 3'-5' exoribonuclease that plays an important role in tRNA 3'-end maturation. Removes nucleotide residues following the 3'-CCA terminus of tRNAs; can also add nucleotides to the ends of RNA molecules by using nucleoside diphosphates as substrates, but this may not be physiologically important. Probably plays a role in initiation of 16S rRNA degradation (leading to ribosome degradation) during starvation. This Salinispora tropica (strain ATCC BAA-916 / DSM 44818 / JCM 13857 / NBRC 105044 / CNB-440) protein is Ribonuclease PH.